We begin with the raw amino-acid sequence, 147 residues long: Small ribosomal subunit protein bS6 (147 aa).

The disordered stretch occupies residues 103-147; the sequence is AARMAANLPSFPEDEDTEEKGSAPLAREEEGIGEEAQTDEAEDKE. Over residues 133–147 the composition is skewed to acidic residues; it reads GIGEEAQTDEAEDKE.

It belongs to the bacterial ribosomal protein bS6 family.

Its function is as follows. Binds together with bS18 to 16S ribosomal RNA. The polypeptide is Small ribosomal subunit protein bS6 (Syntrophobacter fumaroxidans (strain DSM 10017 / MPOB)).